The primary structure comprises 552 residues: Arginine--tRNA ligase (552 aa).

The short motif at 124-134 (GNPTGPLHLAH) is the 'HIGH' region element.

It belongs to the class-I aminoacyl-tRNA synthetase family. Monomer.

Its subcellular location is the cytoplasm. It catalyses the reaction tRNA(Arg) + L-arginine + ATP = L-arginyl-tRNA(Arg) + AMP + diphosphate. In Tropheryma whipplei (strain Twist) (Whipple's bacillus), this protein is Arginine--tRNA ligase.